The chain runs to 272 residues: uncharacterized protein (272 aa).

Residue lysine 185 is the Schiff-base intermediate with substrate of the active site.

Belongs to the DeoC/FbaB aldolase family.

This is an uncharacterized protein from Saccharolobus solfataricus (strain ATCC 35092 / DSM 1617 / JCM 11322 / P2) (Sulfolobus solfataricus).